Here is a 428-residue protein sequence, read N- to C-terminus: MRLEIGNIFIKDIQFGEQTKVENGVLYVNKDEMIKKLSVIEHIKSVDLDIARPGESVRITPVKDVIEPRVKVEGPGGIFPGVISKVETDGSGRTHVLKGAAVVTTGKVVGFQEGIVDMSGVGAEYTPFSKTLNLVVIAEPEDGIEQHRHEEVLRMVGLNAGVYIGEAGRSVTPDEVKVYETDTIFEGAAKYPNLPKVGYVYMLQTQGLLHDTYVYGVDAKKIVPTILYPTEVMDGAILSGNCVSSCDKNPTYVHCNNPMVEELYAMHGKEINFVGVIITNENVYLADKERSSDWTAKLCKFLGLDGAIVSQEGFGNPDTDLIMNCKKIEMEGVKTVISTDEYAGRDGASQSLADADVRANAVVSNGNANMVIVLPPMDKTIGHIQYIDTIAGGFDGSLRADGSIEVEIQAITGATNELGFGYLSAKGY.

Catalysis depends on Cys-242, which acts as the Schiff-base intermediate with substrate; via pyruvic acid. At Cys-242 the chain carries Pyruvic acid (Cys).

As to quaternary structure, heterohexamer of two alpha, two beta and two gamma subunits. Component of the glycine reductase complex, together with components A and C. PB is substrate specific. In terms of processing, the peptide chain is cleaved into beta and alpha chains, and the alpha chain N-terminal cysteine is deaminated and oxidized to form a reactive pyruvoyl group.

It carries out the reaction acetyl phosphate + [thioredoxin]-disulfide + NH4(+) + H2O = [thioredoxin]-dithiol + glycine + phosphate + H(+). Functionally, in the first step of glycine reductase, the substrate is bound to component PB via a Schiff base intermediate. Then the PB-activated substrate is nucleophilically attacked by the selenol anion of component PA to transform it to a carboxymethylated selenoether and the respective amine. By action of component PC, acetyl phosphate is formed, leaving component PA in its oxidized state. Finally component PA becomes reduced by the thioredoxin system to start a new catalytic cycle of reductive deamination. This is Glycine reductase complex component B subunits alpha and beta (grdE) from Peptoclostridium acidaminophilum (Eubacterium acidaminophilum).